Here is a 329-residue protein sequence, read N- to C-terminus: Ribosomal protein L11 methyltransferase (329 aa).

S-adenosyl-L-methionine-binding residues include threonine 177, glycine 198, aspartate 220, and asparagine 264.

Belongs to the methyltransferase superfamily. PrmA family.

The protein resides in the cytoplasm. It carries out the reaction L-lysyl-[protein] + 3 S-adenosyl-L-methionine = N(6),N(6),N(6)-trimethyl-L-lysyl-[protein] + 3 S-adenosyl-L-homocysteine + 3 H(+). Functionally, methylates ribosomal protein L11. The chain is Ribosomal protein L11 methyltransferase from Helicobacter acinonychis (strain Sheeba).